Reading from the N-terminus, the 352-residue chain is Histidine biosynthesis bifunctional protein HisB (352 aa).

The interval 1-164 (MSQKILFIDR…EIENEILSSF (164 aa)) is histidinol-phosphatase. Asp-9 serves as the catalytic Nucleophile. Asp-9 and Asp-11 together coordinate Mg(2+). The active-site Proton donor is Asp-11. Positions 93, 95, 101, and 103 each coordinate Zn(2+). Asp-130 is a binding site for Mg(2+). Positions 165–352 (RSASYQRTTK…ENLASSKGVI (188 aa)) are imidazoleglycerol-phosphate dehydratase.

It in the N-terminal section; belongs to the histidinol-phosphatase family. The protein in the C-terminal section; belongs to the imidazoleglycerol-phosphate dehydratase family. Mg(2+) is required as a cofactor. The cofactor is Zn(2+).

The protein resides in the cytoplasm. It catalyses the reaction D-erythro-1-(imidazol-4-yl)glycerol 3-phosphate = 3-(imidazol-4-yl)-2-oxopropyl phosphate + H2O. The catalysed reaction is L-histidinol phosphate + H2O = L-histidinol + phosphate. Its pathway is amino-acid biosynthesis; L-histidine biosynthesis; L-histidine from 5-phospho-alpha-D-ribose 1-diphosphate: step 6/9. The protein operates within amino-acid biosynthesis; L-histidine biosynthesis; L-histidine from 5-phospho-alpha-D-ribose 1-diphosphate: step 8/9. This Campylobacter jejuni subsp. jejuni serotype O:23/36 (strain 81-176) protein is Histidine biosynthesis bifunctional protein HisB.